Consider the following 516-residue polypeptide: Putative thymidine phosphorylase (516 aa).

It belongs to the thymidine/pyrimidine-nucleoside phosphorylase family. Type 2 subfamily.

It catalyses the reaction thymidine + phosphate = 2-deoxy-alpha-D-ribose 1-phosphate + thymine. The chain is Putative thymidine phosphorylase from Methylococcus capsulatus (strain ATCC 33009 / NCIMB 11132 / Bath).